Here is a 407-residue protein sequence, read N- to C-terminus: [Pyruvate dehydrogenase (acetyl-transferring)] kinase isozyme 2, mitochondrial (407 aa).

One can recognise a Histidine kinase domain in the interval 135 to 364 (LEYKDTYGDD…DAVIYLKALS (230 aa)). 2 positions are modified to phosphotyrosine: Tyr-215 and Tyr-216. ATP contacts are provided by residues 251–258 (ELFKNAMR), Asp-290, 309–310 (ST), and 325–330 (GFGYGL). Lys-376 bears the N6-succinyllysine mark.

Belongs to the PDK/BCKDK protein kinase family. As to quaternary structure, homodimer, and heterodimer with PDK1. Interacts with the pyruvate dehydrogenase complex subunit DLAT, and is part of the multimeric pyruvate dehydrogenase complex that contains multiple copies of pyruvate dehydrogenase (E1), dihydrolipoamide acetyltransferase (DLAT, E2) and lipoamide dehydrogenase (DLD, E3). In terms of tissue distribution, detected in heart (at protein level). Highest level of expression in heart and skeletal muscle and the lowest in spleen and lung. Liver, kidney, brain and testis levels are intermediate.

It is found in the mitochondrion matrix. The enzyme catalyses L-seryl-[pyruvate dehydrogenase E1 alpha subunit] + ATP = O-phospho-L-seryl-[pyruvate dehydrogenase E1 alpha subunit] + ADP + H(+). With respect to regulation, activity increases in response to increased acetyl-CoA and NADH levels and upon binding to the pyruvate dehydrogenase subunit DLAT. Inhibited by ADP and pyruvate; these compounds interfere with DLAT binding and thereby inhibit kinase activity. Inhibited by dichloroacetate. Inhibited by AZD7545; this compound interferes with DLAT binding and thereby inhibits kinase activity. Reactive oxygen species cause the formation of disulfide bonds, and thereby inhibit the enzyme. In terms of biological role, kinase that plays a key role in the regulation of glucose and fatty acid metabolism and homeostasis via phosphorylation of the pyruvate dehydrogenase subunits PDHA1 and PDHA2. This inhibits pyruvate dehydrogenase activity, and thereby regulates metabolite flux through the tricarboxylic acid cycle, down-regulates aerobic respiration and inhibits the formation of acetyl-coenzyme A from pyruvate. Inhibition of pyruvate dehydrogenase decreases glucose utilization and increases fat metabolism. Mediates cellular responses to insulin. Plays an important role in maintaining normal blood glucose levels and in metabolic adaptation to nutrient availability. Via its regulation of pyruvate dehydrogenase activity, plays an important role in maintaining normal blood pH and in preventing the accumulation of ketone bodies under starvation. Plays a role in the regulation of cell proliferation and in resistance to apoptosis under oxidative stress. Plays a role in p53/TP53-mediated apoptosis. This is [Pyruvate dehydrogenase (acetyl-transferring)] kinase isozyme 2, mitochondrial (Pdk2) from Rattus norvegicus (Rat).